Consider the following 78-residue polypeptide: Acyl carrier protein (78 aa).

A Carrier domain is found at 2–77 (SEIASRVKAI…DAVSYIEEHA (76 aa)). Ser-37 carries the post-translational modification O-(pantetheine 4'-phosphoryl)serine.

Belongs to the acyl carrier protein (ACP) family. 4'-phosphopantetheine is transferred from CoA to a specific serine of apo-ACP by AcpS. This modification is essential for activity because fatty acids are bound in thioester linkage to the sulfhydryl of the prosthetic group.

It is found in the cytoplasm. Its pathway is lipid metabolism; fatty acid biosynthesis. Its function is as follows. Carrier of the growing fatty acid chain in fatty acid biosynthesis. This is Acyl carrier protein from Bacteroides thetaiotaomicron (strain ATCC 29148 / DSM 2079 / JCM 5827 / CCUG 10774 / NCTC 10582 / VPI-5482 / E50).